Consider the following 352-residue polypeptide: Pre-rRNA-processing protein ipi1 (352 aa).

Belongs to the IPI1/TEX10 family. As to quaternary structure, component of the RIX1 complex, composed of rrm-9/ipi1, rix1/ipi2 and ipi3 in a 1:2:2 stoichiometry. The complex interacts (via rix1) with mdn1 (via its hexameric AAA ATPase ring) and the pre-60S ribosome particles.

The protein localises to the nucleus. Its function is as follows. Component of the RIX1 complex required for processing of ITS2 sequences from 35S pre-rRNA. This is Pre-rRNA-processing protein ipi1 (rrm-9) from Neurospora crassa (strain ATCC 24698 / 74-OR23-1A / CBS 708.71 / DSM 1257 / FGSC 987).